Consider the following 194-residue polypeptide: Protein GrpE (194 aa).

The span at 1 to 12 (MNKQKNNRERTP) shows a compositional bias: basic and acidic residues. The tract at residues 1–44 (MNKQKNNRERTPQPEQDTERDEQLTNSHENDIDSAPAAEENDKV) is disordered.

This sequence belongs to the GrpE family. As to quaternary structure, homodimer.

It is found in the cytoplasm. Participates actively in the response to hyperosmotic and heat shock by preventing the aggregation of stress-denatured proteins, in association with DnaK and GrpE. It is the nucleotide exchange factor for DnaK and may function as a thermosensor. Unfolded proteins bind initially to DnaJ; upon interaction with the DnaJ-bound protein, DnaK hydrolyzes its bound ATP, resulting in the formation of a stable complex. GrpE releases ADP from DnaK; ATP binding to DnaK triggers the release of the substrate protein, thus completing the reaction cycle. Several rounds of ATP-dependent interactions between DnaJ, DnaK and GrpE are required for fully efficient folding. This chain is Protein GrpE, found in Porphyromonas gingivalis (strain ATCC 33277 / DSM 20709 / CIP 103683 / JCM 12257 / NCTC 11834 / 2561).